A 108-amino-acid chain; its full sequence is UPF0145 protein Fnod_0426 (108 aa).

It belongs to the UPF0145 family.

The chain is UPF0145 protein Fnod_0426 from Fervidobacterium nodosum (strain ATCC 35602 / DSM 5306 / Rt17-B1).